Here is a 1235-residue protein sequence, read N- to C-terminus: Serine/threonine-protein kinase TAO2 (1235 aa).

S9 is modified (phosphoserine). Residues 28-281 (FSDLREIGHG…SEVLLKHRFV (254 aa)) enclose the Protein kinase domain. ATP contacts are provided by residues 34–42 (IGHGSFGAV) and K57. The Proton acceptor role is filled by D151. The residue at position 181 (S181) is a Phosphoserine. The disordered stretch occupies residues 318–457 (QEAPNGPGAE…TSTTSSARRR (140 aa)). Residues 350–374 (SSHSVPSMSISASSQSSSVNSLADA) are compositionally biased toward low complexity. A compositionally biased stretch (acidic residues) spans 375–393 (SDNEEEEEEEEEEEEEEEG). The span at 394–409 (PEAREMAMMQEGEHTV) shows a compositional bias: basic and acidic residues. S414 carries the post-translational modification Phosphoserine. Coiled coils occupy residues 486–547 (SALR…RRHQ) and 574–601 (KELAALLEAQKRTYKLRKEQLKEELQEN). S656 is modified (phosphoserine). Positions 681–713 (LRQHEATRELELRQLQAVQRTRAELTRLQHQTE) form a coiled coil. Disordered stretches follow at residues 732-777 (HAAQ…QPCS), 804-835 (KEGATLEPKQQRILGEESGAPSPSPQKHGSLV), and 891-939 (QGPA…RPCP). A compositionally biased stretch (polar residues) spans 766–777 (NTGTPIEQQPCS). S777, S825, and S827 each carry phosphoserine. Acidic residues predominate over residues 899–908 (PEEEEEEEEG). Pro residues predominate over residues 924–934 (PDIPPEPPPTH). 2 helical membrane passes run 965-985 (LLPLLLLLLLPLLAAQGGGGL) and 987-1007 (AALLALEVGLVGLGASYLLLC). H1011 and G1031 each carry phosphoserine. A run of 3 helical transmembrane segments spans residues 1012-1032 (LPSSLFLLLAQGTALGAVLGL), 1043-1063 (LGLGAAWLLAWPGLALPLVAM), and 1166-1186 (QGLASHLPPWAIHTLASWGLL). A disordered region spans residues 1198-1235 (LPRSQRQLGPPASRQPLPGTLAGRRSRTRQSRALPPWR).

The protein belongs to the protein kinase superfamily. STE Ser/Thr protein kinase family. STE20 subfamily. As to quaternary structure, interacts with MAP2K3 and MAP2K6. Self-associates. Interacts with tubulins through the C-terminal domain. Interacts with MAP3K7 and interferes with MAP3K7-binding to CHUK and thus prevents NF-kappa-B activation. Isoform 2 interacts with PCDH8; this complex may also include CDH2. The cofactor is Mg(2+). Post-translationally, isoforms 1 and 2 are autophosphorylated. C-terminal cleavage of isoform 1 and subsequent nuclear localization requires CASP9 activity. In terms of processing, autophosphorylated. Phosphorylated by ATM. Post-translationally, phosphorylated on Ser-1031 by MAPK14. This phosphorylation is required PCDH8 for endocytosis. In terms of tissue distribution, ubiquitously expressed, with a higher level of expression in testis and brain.

The protein resides in the cytoplasmic vesicle membrane. It is found in the cytoplasm. The protein localises to the cytoskeleton. It localises to the nucleus. Its subcellular location is the cell projection. The protein resides in the dendrite. It catalyses the reaction L-seryl-[protein] + ATP = O-phospho-L-seryl-[protein] + ADP + H(+). The enzyme catalyses L-threonyl-[protein] + ATP = O-phospho-L-threonyl-[protein] + ADP + H(+). Selectively inhibited by the enantiopure organoruthenium inhibitor 9E1. Activated following arsenic trioxide (As(2)O(3)) treatment. In terms of biological role, serine/threonine-protein kinase involved in different processes such as membrane blebbing and apoptotic bodies formation DNA damage response and MAPK14/p38 MAPK stress-activated MAPK cascade. Phosphorylates itself, MBP, activated MAPK8, MAP2K3, MAP2K6 and tubulins. Activates the MAPK14/p38 MAPK signaling pathway through the specific activation and phosphorylation of the upstream MAP2K3 and MAP2K6 kinases. In response to DNA damage, involved in the G2/M transition DNA damage checkpoint by activating the p38/MAPK14 stress-activated MAPK cascade, probably by mediating phosphorylation of upstream MAP2K3 and MAP2K6 kinases. Isoform 1, but not isoform 2, plays a role in apoptotic morphological changes, including cell contraction, membrane blebbing and apoptotic bodies formation. This function, which requires the activation of MAPK8/JNK and nuclear localization of C-terminally truncated isoform 1, may be linked to the mitochondrial CASP9-associated death pathway. Isoform 1 binds to microtubules and affects their organization and stability independently of its kinase activity. Prevents MAP3K7-mediated activation of CHUK, and thus NF-kappa-B activation, but not that of MAPK8/JNK. May play a role in the osmotic stress-MAPK8 pathway. Isoform 2, but not isoform 1, is required for PCDH8 endocytosis. Following homophilic interactions between PCDH8 extracellular domains, isoform 2 phosphorylates and activates MAPK14/p38 MAPK which in turn phosphorylates isoform 2. This process leads to PCDH8 endocytosis and CDH2 cointernalization. Both isoforms are involved in MAPK14 phosphorylation. This Homo sapiens (Human) protein is Serine/threonine-protein kinase TAO2 (TAOK2).